The following is a 73-amino-acid chain: UPF0352 protein HD_1515 (73 aa).

It belongs to the UPF0352 family.

The protein is UPF0352 protein HD_1515 of Haemophilus ducreyi (strain 35000HP / ATCC 700724).